The primary structure comprises 846 residues: Outer membrane channel protein CpnT (846 aa).

The NTD stretch occupies residues 1 to 443 (MAPLAVDPAA…AGVRGLKERL (443 aa)). The tract at residues 442–630 (RLEPTTPHLE…SGSEPPGLHA (189 aa)) is disordered. 2 stretches are compositionally biased toward pro residues: residues 450-466 (LEPP…PPRI) and 475-504 (APAP…PPVD). Low complexity-rich tracts occupy residues 508–517 (EPVAPSSASA) and 562–586 (APAT…HSTP). The tract at residues 651–846 (RLSDEAVDPQ…ELIRRGVLRQ (196 aa)) is TNT. The TNT domain occupies 751 to 846 (YGPQLDRIGG…ELIRRGVLRQ (96 aa)). Arg757 is a catalytic residue. NAD(+) is bound at residue Arg780. Gln822 is a catalytic residue.

Interacts with the immunity factor for TNT (IFT) homolog. The C-terminal domain (TNT) is probably cleaved.

The protein localises to the cell outer membrane. It is found in the secreted. The protein resides in the cell surface. The enzyme catalyses NAD(+) + H2O = ADP-D-ribose + nicotinamide + H(+). Its activity is regulated as follows. Glycohydrolase activity is completely inhibited by interaction with the immunity factor for TNT (IFT) homolog. This inhibition protects M.bovis from self-poisoning. Its function is as follows. The N-terminal domain (NTD) forms an outer membrane channel and is used for uptake of nutrients across the outer membrane. Also confers susceptibility to structurally different antibiotics and antituberculosis drugs, and to toxic immune factors such as nitric oxide (NO). The C-terminal domain (TNT) is dispensable for normal growth in macrophages. The sequence is that of Outer membrane channel protein CpnT from Mycobacterium bovis (strain BCG / Pasteur 1173P2).